Consider the following 77-residue polypeptide: NEDD8-like protein RUB1 (77 aa).

Residues 1–74 (MIVKVKTLTG…MQLHLVLTLR (74 aa)) enclose the Ubiquitin-like domain. A Glycyl lysine isopeptide (Gly-Lys) (interchain with K-? in acceptor proteins) cross-link involves residue G76. A propeptide is located at residue N77.

As to quaternary structure, interacts with CDC53 and DCN1.

Functionally, ubiquitin-like protein modifier that can be covalently attached to lysine residues of target proteins. Activated by the dimeric UBA3-ULA1 E1 enzyme and conjugated by the E2 UBC12 to substrate proteins. RUB1-conjugated (neddylated) substrate proteins include the cullins CDC53, RTT101 and CUL3, and the modification enhances the ubiquitin-ligase activity of the corresponding cullin-RING-based E3 ubiquitin-protein ligase complexes (CRLs). In Saccharomyces cerevisiae (strain ATCC 204508 / S288c) (Baker's yeast), this protein is NEDD8-like protein RUB1 (RUB1).